A 119-amino-acid polypeptide reads, in one-letter code: Large ribosomal subunit protein bL20 (119 aa).

Belongs to the bacterial ribosomal protein bL20 family.

Functionally, binds directly to 23S ribosomal RNA and is necessary for the in vitro assembly process of the 50S ribosomal subunit. It is not involved in the protein synthesizing functions of that subunit. The polypeptide is Large ribosomal subunit protein bL20 (Rhodopseudomonas palustris (strain BisB18)).